Consider the following 278-residue polypeptide: MNNILSEEVLNVTDFTTSRQLTLWKREDLQSSQLDDVAEEVPVALVYNGISHVVMMASPKDLTHFAMGFSLSEGIIDSPREIYGMDVVPSCNGLEVQIDLSSRRFMGLKARRRALAGRTGCGVCGVEQLNDIGKPVQPLPFSQTFNLGNLDRALKHLNDFQPTGKLTGCTHAAAWVMPSGELAGGHEDVGRHVALDKLLGRRATEGEEWRQGAALVSSRASYEMVQKSAMCGVEILFAVSAATTLAVEVAERCNLTLVGFCKPGRATIYTHPQRLIAD.

Cys-121 acts as the Cysteine persulfide intermediate in catalysis. 260–265 is a Mo-bis(molybdopterin guanine dinucleotide) binding site; that stretch reads FCKPGR.

It belongs to the FdhD family.

It localises to the cytoplasm. Its function is as follows. Required for formate dehydrogenase (FDH) activity. Acts as a sulfur carrier protein that transfers sulfur from IscS to the molybdenum cofactor prior to its insertion into FDH. The sequence is that of Sulfur carrier protein FdhD from Salmonella heidelberg (strain SL476).